Consider the following 294-residue polypeptide: Phosphate import ATP-binding protein PstB (294 aa).

Residues 1 to 18 (MSETMTNQNVVNEEQPFN) show a composition bias toward polar residues. Positions 1-24 (MSETMTNQNVVNEEQPFNESKHRS) are disordered. Positions 48 to 289 (LEVNKLKLFY…PSCKQTEDYI (242 aa)) constitute an ABC transporter domain. 80 to 87 (GPSGCGKS) provides a ligand contact to ATP.

It belongs to the ABC transporter superfamily. Phosphate importer (TC 3.A.1.7) family. As to quaternary structure, the complex is composed of two ATP-binding proteins (PstB), two transmembrane proteins (PstC and PstA) and a solute-binding protein (PstS).

It is found in the cell inner membrane. It carries out the reaction phosphate(out) + ATP + H2O = ADP + 2 phosphate(in) + H(+). In terms of biological role, part of the ABC transporter complex PstSACB involved in phosphate import. Responsible for energy coupling to the transport system. The chain is Phosphate import ATP-binding protein PstB from Hahella chejuensis (strain KCTC 2396).